Reading from the N-terminus, the 476-residue chain is Hydrogenase-4 component F homolog (476 aa).

12 helical membrane-spanning segments follow: residues 1 to 21, 25 to 45, 54 to 74, 120 to 140, 153 to 173, 202 to 222, 235 to 255, 270 to 290, 307 to 327, 368 to 388, 402 to 422, and 442 to 462; these read MSAA…SQIS, ISSW…LFLL, FFLV…IGFT, IGLM…MVGI, YFIL…LFYI, LVNI…GLFP, PTPI…YAIL, AGPL…LMFY, MGII…AGLL, LGWG…MGVF, SPLL…ALIL, and LYLP…YIPP.

Belongs to the complex I subunit 5 family.

It localises to the cell inner membrane. This Methylacidiphilum infernorum (isolate V4) (Methylokorus infernorum (strain V4)) protein is Hydrogenase-4 component F homolog (hyfF).